We begin with the raw amino-acid sequence, 203 residues long: RNA annealing protein YRA2 (203 aa).

Met1 is modified (N-acetylmethionine). Disordered stretches follow at residues 1 to 60 and 137 to 203; these read MDKA…REEP and QPQR…YMKG. Polar residues predominate over residues 11–20; sequence NSHTDSSSNH. Residues 47-60 are compositionally biased toward basic and acidic residues; the sequence is SRSKDRLYREREEP. Residues 64-138 enclose the RRM domain; it reads KRIRISKIPL…AKIEVEIYQP (75 aa). The span at 139–153 shows a compositional bias: basic residues; that stretch reads QRKHSRMNAHNRRKQ. Basic and acidic residues predominate over residues 154-164; that stretch reads TAQEHGRDRPG. Residues 165 to 180 show a composition bias toward basic residues; the sequence is SHYRQKPNRVSKKNKG.

It belongs to the YRA1 family. Associates with mRNPs. Interacts with YRA1.

The protein resides in the nucleus. Its function is as follows. Involved in export of poly(A) mRNAs from the nucleus. Recruited to the coding sequences as well as poly-A sites of active genes. This Saccharomyces cerevisiae (strain YJM789) (Baker's yeast) protein is RNA annealing protein YRA2 (YRA2).